The following is a 252-amino-acid chain: Protein BTG3 (252 aa).

A disordered region spans residues 138 to 162; it reads VTSDYHSGSSSSDEDTSKEVEVKPS.

The protein belongs to the BTG family. In terms of tissue distribution, highly expressed in the brain.

Functionally, overexpression impairs serum-induced cell cycle progression from the G0/G1 to S phase. This chain is Protein BTG3, found in Rattus norvegicus (Rat).